The primary structure comprises 866 residues: MEDRHRYLFFIFAIIHYVQAQQGFISLDCGLPSNEPPYIEPVTGLVFSSDADHIPSGISGRIQKNLEAVHIKPYLFLRYFPDGLRNCYTLDVLQNRRYMIKAVFVYGNYDGYNDYPSFDLYLGPNKWVRVDLEGKVNGSVEEIIHIPSSNSLQICLVKTGNSLPFISALELRLLRNDTYVVQDVSLKHLFRRYYRQSDRLIRYPDDVYDRVWSPFFLPEWTQITTSLDVNNSNNYEPPKAALTSAATPGDNGTRLTIIWTLDNPDEQIHLYVHFAELEPVGENTDEALRTLFTRTFYFVVNGKISYDESITPLDLAVSTVETVVNKCDGGNCSLQLVRSEASPGVRVPLVNAMEAFTAIKFPHSETNPDDVISIKVIQATYELSRVDWQGDPCLPQQFLWTGLNCSYMNMSTSPRIISLDLSSHKLTGKIVPDIQNLTQLQKLDLSNNKLTGGVPEFLANMKSLLFINLSNNNLVGSIPQALLDRKNLKLEFEGNPKLCATGPCNSSSGNKETTVIAPVAAAIAIFIAVLVLIIVFIKKRPSSIRALHPSRANLSLENKKRRITYSEILLMTNNFERVIGEGGFGVVYHGYLNDSEQVAVKVLSPSSSQGYKEFKAEVELLLRVHHINLVSLVGYCDEQAHLALIYEYMANGDLKSHLSGKHGDCVLKWENRLSIAVETALGLEYLHSGCKPLMVHRDVKSMNILLDEHFQAKLADFGLSRSFSVGEESHVSTGVVGTPGYLDPEYYRTYRLTEKSDVYSFGIVLLEIITNQPVLEQANENRHIAERVRTMLTRSDISTIVDPNLIGEYDSGSVRKALKLAMSCVDPSPVARPDMSHVVQELKQCIKSENLRLRTGLNQVIDSKSS.

The signal sequence occupies residues 1–20 (MEDRHRYLFFIFAIIHYVQA). Topologically, residues 21-515 (QQGFISLDCG…SSSGNKETTV (495 aa)) are extracellular. N-linked (GlcNAc...) asparagine glycans are attached at residues Asn137, Asn176, Asn230, Asn251, Asn331, Asn404, Asn409, and Asn436. LRR repeat units follow at residues 415–438 (RIIS…QNLT), 439–461 (QLQK…LANM), and 463–485 (SLLF…LLDR). Residues Asn468 and Asn505 are each glycosylated (N-linked (GlcNAc...) asparagine). The helical transmembrane segment at 516-536 (IAPVAAAIAIFIAVLVLIIVF) threads the bilayer. Residues 537–866 (IKKRPSSIRA…LNQVIDSKSS (330 aa)) are Cytoplasmic-facing. Thr564 is modified (phosphothreonine). In terms of domain architecture, Protein kinase spans 573 to 846 (NNFERVIGEG…HVVQELKQCI (274 aa)). Residues 579–587 (IGEGGFGVV) and Lys601 each bind ATP. Phosphotyrosine is present on Tyr646. Residue Asp698 is the Proton acceptor of the active site. Ser732 carries the phosphoserine modification. Thr733 and Thr738 each carry phosphothreonine. The residue at position 746 (Tyr746) is a Phosphotyrosine.

The protein belongs to the protein kinase superfamily. Ser/Thr protein kinase family.

It localises to the membrane. It catalyses the reaction L-seryl-[protein] + ATP = O-phospho-L-seryl-[protein] + ADP + H(+). The enzyme catalyses L-threonyl-[protein] + ATP = O-phospho-L-threonyl-[protein] + ADP + H(+). This Arabidopsis thaliana (Mouse-ear cress) protein is Probable LRR receptor-like serine/threonine-protein kinase At5g16900.